Reading from the N-terminus, the 113-residue chain is Insulin (113 aa).

The first 24 residues, 1–24 (MAALWLQAFSLLVLMMVSWPGSQA), serve as a signal peptide directing secretion. 3 cysteine pairs are disulfide-bonded: C32/C99, C44/C112, and C98/C103. Residues 56 to 90 (DVDPLLGFLPPKAGGAVVQGGENEVTFKDQMEMMV) constitute a propeptide, c peptide.

This sequence belongs to the insulin family. In terms of assembly, heterodimer of a B chain and an A chain linked by two disulfide bonds.

It localises to the secreted. Its function is as follows. Insulin decreases blood glucose concentration. It increases cell permeability to monosaccharides, amino acids and fatty acids. It accelerates glycolysis, the pentose phosphate cycle, and glycogen synthesis in liver. The protein is Insulin (ins) of Oreochromis niloticus (Nile tilapia).